We begin with the raw amino-acid sequence, 233 residues long: Delta-actitoxin-Amc1a (233 aa).

The first 18 residues, 1 to 18 (MKRIFIVALLFATCLVNA), serve as a signal peptide directing secretion. 2 propeptides span residues 19 to 29 (KPSINDADIKR) and 30 to 33 (EPEP). Hydroxyproline is present on proline 39. 2 disulfides stabilise this stretch: cysteine 40–cysteine 51 and cysteine 43–cysteine 58. 2 propeptides span residues 61–63 (RKR) and 64–67 (EPEP). Proline 73 bears the Hydroxyproline mark. Intrachain disulfides connect cysteine 74–cysteine 85 and cysteine 77–cysteine 92. 2 propeptides span residues 95–97 (RKR) and 98–101 (EPEP). Position 107 is a hydroxyproline (proline 107). 2 cysteine pairs are disulfide-bonded: cysteine 108/cysteine 119 and cysteine 111/cysteine 126. Propeptides lie at residues 129-131 (RKR) and 132-135 (EPEP). Position 141 is a hydroxyproline (proline 141). 2 disulfide bridges follow: cysteine 142–cysteine 153 and cysteine 145–cysteine 160. Propeptides lie at residues 163–165 (RKR) and 166–169 (EPEP). Proline 175 bears the Hydroxyproline mark. Intrachain disulfides connect cysteine 176-cysteine 187 and cysteine 179-cysteine 194. 2 consecutive propeptides follow at residues 197-199 (RKR) and 200-203 (EPEP). Proline 209 is modified (hydroxyproline). Disulfide bonds link cysteine 210-cysteine 221 and cysteine 213-cysteine 228. Positions 231–233 (RKR) are excised as a propeptide.

It belongs to the sea anemone BBH family. Post-translationally, each Am I peptide may contain 2 disulfide bonds. The precursor protein seems to be processed in the following sequence: release of the signal peptide and of the propeptide, production of six identical 34-residue peptides by cleavage between Arg and Glu, release of four N-terminal and three C-terminal residues from each peptide and hydroxylation of each Pro in position 6 of the resulting 27-residue peptides.

The protein localises to the secreted. The protein resides in the nematocyst. In terms of biological role, may inhibit voltage-gated sodium channels (Nav). This is Delta-actitoxin-Amc1a from Antheopsis maculata (Sea anemone).